The following is a 206-amino-acid chain: uncharacterized protein (206 aa).

This is an uncharacterized protein from Haemophilus influenzae (strain ATCC 51907 / DSM 11121 / KW20 / Rd).